A 469-amino-acid polypeptide reads, in one-letter code: Pancreatic lipase-related protein 2 (469 aa).

Residues 1-17 (MLPSWTIGLLLLATVRG) form the signal peptide. Cysteines 21 and 27 form a disulfide. Residue asparagine 71 is glycosylated (N-linked (GlcNAc...) asparagine). A required for galactolipase activity region spans residues 93-105 (IHGFIDDGDSGWP). A disulfide bridge links cysteine 109 with cysteine 120. Serine 171 serves as the catalytic Nucleophile. Aspartate 195 acts as the Charge relay system in catalysis. Ca(2+) contacts are provided by glutamate 206, arginine 209, aspartate 211, and aspartate 214. A disulfide bond links cysteine 256 and cysteine 280. The required for galactolipase activity stretch occupies residues 257–279 (QKNILSTIIDINGIWQGIQDFVA). The active-site Charge relay system is histidine 282. 2 cysteine pairs are disulfide-bonded: cysteine 304–cysteine 315 and cysteine 318–cysteine 323. N-linked (GlcNAc...) asparagine glycans are attached at residues asparagine 353, asparagine 399, and asparagine 455. Positions 357–469 (WRYRVSVTLA…ENALQTLYPC (113 aa)) constitute a PLAT domain. A disulfide bridge links cysteine 453 with cysteine 469.

This sequence belongs to the AB hydrolase superfamily. Lipase family.

The protein resides in the secreted. The protein localises to the zymogen granule membrane. It is found in the cell projection. Its subcellular location is the neuron projection. The enzyme catalyses a triacylglycerol + H2O = a diacylglycerol + a fatty acid + H(+). It carries out the reaction a 1,2-diacyl-3-O-(beta-D-galactosyl)-sn-glycerol + 2 H2O = 3-beta-D-galactosyl-sn-glycerol + 2 a fatty acid + 2 H(+). It catalyses the reaction 1,2,3-tri-(9Z-octadecenoyl)-glycerol + H2O = di-(9Z)-octadecenoylglycerol + (9Z)-octadecenoate + H(+). The catalysed reaction is di-(9Z)-octadecenoylglycerol + H2O = (9Z-octadecenoyl)-glycerol + (9Z)-octadecenoate + H(+). The enzyme catalyses (9Z-octadecenoyl)-glycerol + H2O = glycerol + (9Z)-octadecenoate + H(+). It carries out the reaction 1-(9Z-octadecenoyl)-glycerol + H2O = glycerol + (9Z)-octadecenoate + H(+). It catalyses the reaction 1,2,3-tripropanoylglycerol + H2O = dipropanoylglycerol + propanoate + H(+). The catalysed reaction is 1,2,3-tributanoylglycerol + H2O = dibutanoylglycerol + butanoate + H(+). The enzyme catalyses 1,2,3-trioctanoylglycerol + H2O = dioctanoylglycerol + octanoate + H(+). It carries out the reaction 1,2-didecanoylglycerol + H2O = decanoylglycerol + decanoate + H(+). It catalyses the reaction long chain 1,2-diacyl-3-O-beta-D-galactosyl-sn-glycerol + H2O = long chain acyl-3-O-beta-D-galactosyl-sn-glycerol + a fatty acid + H(+). The catalysed reaction is 1,2-dioctanoyl-3-O-beta-D-galactosyl-sn-glycerol + H2O = octanoyl-3-(beta-D-galactosyl)-sn-glycerol + octanoate + H(+). The enzyme catalyses 1,2-didodecanoyl-3-beta-D-galactosyl-sn-glycerol + H2O = dodecanoyl-3-beta-D-galactosyl-sn-glycerol + dodecanoate + H(+). It carries out the reaction 1-beta-D-galactosyl-2,3-didodecanoyl-sn-glycerol + H2O = 1-beta-D-galactosyl-dodecanoyl-sn-glycerol + dodecanoate + H(+). It catalyses the reaction a 1,2-diacyl-3-O-[alpha-D-galactosyl-(1-&gt;6)-beta-D-galactosyl]-sn-glycerol + H2O = acyl-3-O-[alpha-D-galactosyl-(1-&gt;6)-beta-D-galactosyl]-sn-glycerol + a fatty acid + H(+). The catalysed reaction is long chain 1,2-diacyl-3-O-[alpha-D-galactosyl-(1-&gt;6)-beta-D-galactosyl]-sn-glycerol + H2O = long chain acyl-3-O-[alpha-D-galactosyl-(1-&gt;6)-beta-D-galactosyl]-sn-glycerol + a fatty acid + H(+). The enzyme catalyses 1,2-dioctanoyl-3-O-[alpha-D-galactosyl-(1-&gt;6)-beta-D-galactosyl]-sn-glycerol + H2O = octanoyl-3-O-[alpha-D-galactosyl-(1-&gt;6)-beta-D-galactosyl]-sn-glycerol + octanoate + H(+). It carries out the reaction 1,2-didodecanoyl-3-O-[alpha-D-galactosyl-(1-&gt;6)-beta-D-galactosyl]-sn-glycerol + H2O = dodecanoyl-3-O-[alpha-D-galactosyl-(1-&gt;6)-beta-D-galactosyl]-sn-glycerol + dodecanoate + H(+). It catalyses the reaction a 1,2-diacyl-sn-glycero-3-phosphocholine + H2O = a monoacyl-sn-glycero-3-phosphocholine + a fatty acid + H(+). Its pathway is glycerolipid metabolism; triacylglycerol degradation. It participates in glycolipid metabolism. Functionally, lipase that primarily hydrolyzes triglycerides and galactosylglycerides. In neonates, may play a major role in pancreatic digestion of dietary fats such as milk fat globules enriched in long-chain triglycerides. Hydrolyzes short-, medium- and long-chain fatty acyls in triglycerides without apparent positional specificity. Can completely deacylate triacylglycerols. When the liver matures and bile salt synthesis increases, likely functions mainly as a galactolipase and monoacylglycerol lipase. Hydrolyzes monogalactosyldiglycerols (MGDG) and digalactosyldiacylglycerols (DGDG) present in a plant-based diet, releasing long-chain polyunsaturated fatty acids. Hydrolyzes medium- and long-chain fatty acyls in galactolipids. May act together with LIPF to hydrolyze partially digested triglycerides. Hydrolyzes long-chain monoglycerides with high efficiency. In cytotoxic T cells, contributes to perforin-dependent cell lysis, but is unlikely to mediate direct cytotoxicity. Also has low phospholipase activity. In neurons, required for the localization of the phospholipid 1-oleoyl-2-palmitoyl-PC (OPPC) to neurite tips through acyl chain remodeling of membrane phospholipids. The resulting OPPC-rich lipid membrane domain recruits the t-SNARE protein STX4 by selectively interacting with the STX4 transmembrane domain and this promotes surface expression of the dopamine transporter SLC6A3/DAT at neurite tips by facilitating fusion of SLC6A3-containing transport vesicles with the plasma membrane. The protein is Pancreatic lipase-related protein 2 of Bos taurus (Bovine).